The chain runs to 73 residues: Translation initiation factor IF-1 (73 aa).

Residues 1–72 (MAKEDAIEVE…NRGRITYRSK (72 aa)) enclose the S1-like domain.

It belongs to the IF-1 family. As to quaternary structure, component of the 30S ribosomal translation pre-initiation complex which assembles on the 30S ribosome in the order IF-2 and IF-3, IF-1 and N-formylmethionyl-tRNA(fMet); mRNA recruitment can occur at any time during PIC assembly.

The protein localises to the cytoplasm. Its function is as follows. One of the essential components for the initiation of protein synthesis. Stabilizes the binding of IF-2 and IF-3 on the 30S subunit to which N-formylmethionyl-tRNA(fMet) subsequently binds. Helps modulate mRNA selection, yielding the 30S pre-initiation complex (PIC). Upon addition of the 50S ribosomal subunit IF-1, IF-2 and IF-3 are released leaving the mature 70S translation initiation complex. The protein is Translation initiation factor IF-1 of Syntrophobacter fumaroxidans (strain DSM 10017 / MPOB).